A 609-amino-acid polypeptide reads, in one-letter code: Mitochondrial nucleoid-associated protein 1 (609 aa).

The Extracellular portion of the chain corresponds to 1-554 (MSDNPPRMEV…CNTTIRKSGF (554 aa)). 2 disordered regions span residues 133-163 (QEET…GESR) and 406-425 (SPEG…QASH). Residues 146 to 161 (TSPKRELAEDLPKSGE) are compositionally biased toward basic and acidic residues. Residues 555-571 (GGITMLSTGYFVLCCSW) form a helical membrane-spanning segment. Residues 572-609 (SFRRLKKLCRPLPWKSTVPPSVGVAKTTGDCRSKTCLD) lie on the Cytoplasmic side of the membrane.

It is found in the mitochondrion inner membrane. Its subcellular location is the mitochondrion matrix. The protein resides in the mitochondrion nucleoid. In terms of biological role, critical regulator of mitochondrial DNA (mtDNA) abundance. Binds dsDNA throughout the mitochondrial genome without sequence specificity and controls mtDNA copy number by promoting its replication. Also plays important roles in mitochondrial metabolism and cell proliferation. The chain is Mitochondrial nucleoid-associated protein 1 from Pongo abelii (Sumatran orangutan).